Reading from the N-terminus, the 384-residue chain is L-aspartate decarboxylase (384 aa).

Position 231 is an N6-(pyridoxal phosphate)lysine (K231).

Belongs to the group II decarboxylase family. MfnA subfamily. In terms of assembly, homodimer. Can also form homohexamers. Pyridoxal 5'-phosphate is required as a cofactor.

It carries out the reaction L-aspartate + H(+) = beta-alanine + CO2. Its pathway is cofactor biosynthesis; coenzyme A biosynthesis. Inhibited by hydroxylamine. Functionally, catalyzes the decarboxylation of L-aspartate to produce beta-alanine. In vitro, can also catalyze the decarboxylation of L-glutamate to produce 4-aminobutanoate, but this activity does not seem necessary in vivo. Shows much higher activity with L-aspartate than with L-glutamate. Does not decarboxylate L-tyrosine. This chain is L-aspartate decarboxylase, found in Thermococcus kodakarensis (strain ATCC BAA-918 / JCM 12380 / KOD1) (Pyrococcus kodakaraensis (strain KOD1)).